We begin with the raw amino-acid sequence, 317 residues long: Dehydrogenase/reductase SDR family protein 7-like (317 aa).

Topologically, residues 1–10 are cytoplasmic; the sequence is MKNLAERSAG. The chain crosses the membrane as a helical; Signal-anchor for type II membrane protein span at residues 11–31; the sequence is SLYWWLLATLFLPIAIPGLVL. Over 32–317 the chain is Peroxisomal; sequence KLLTMMKEQR…KKRAEKLNST (286 aa). 52–76 is an NAD(+) binding site; the sequence is LITGASSGLGEALAHSFFLAGCKVV. A substrate-binding site is contributed by S189. Residue Y202 is the Proton acceptor of the active site.

It belongs to the short-chain dehydrogenases/reductases (SDR) family.

It localises to the peroxisome membrane. Putative oxidoreductase. The sequence is that of Dehydrogenase/reductase SDR family protein 7-like from Anopheles gambiae (African malaria mosquito).